A 427-amino-acid chain; its full sequence is Adenylosuccinate synthetase (427 aa).

GTP is bound by residues 12-18 (GDEGKGK) and 40-42 (GHT). Aspartate 13 functions as the Proton acceptor in the catalytic mechanism. Positions 13 and 40 each coordinate Mg(2+). IMP is bound by residues 13 to 16 (DEGK), 38 to 41 (NAGH), threonine 130, arginine 144, glutamine 224, threonine 239, and arginine 303. The active-site Proton donor is histidine 41. 299 to 305 (SVTGRPR) contributes to the substrate binding site. GTP contacts are provided by residues arginine 305, 331–333 (KLD), and 411–413 (SVG).

It belongs to the adenylosuccinate synthetase family. Homodimer. Requires Mg(2+) as cofactor.

Its subcellular location is the cytoplasm. It carries out the reaction IMP + L-aspartate + GTP = N(6)-(1,2-dicarboxyethyl)-AMP + GDP + phosphate + 2 H(+). The protein operates within purine metabolism; AMP biosynthesis via de novo pathway; AMP from IMP: step 1/2. Functionally, plays an important role in the de novo pathway of purine nucleotide biosynthesis. Catalyzes the first committed step in the biosynthesis of AMP from IMP. This is Adenylosuccinate synthetase from Sorangium cellulosum (strain So ce56) (Polyangium cellulosum (strain So ce56)).